The following is a 408-amino-acid chain: WD repeat-containing protein JIP5 (408 aa).

WD repeat units follow at residues 5–44 (PVGS…DSHN), 50–86 (PSKR…TTDI), 87–130 (DARS…SVKT), 133–172 (QHFD…PKVV), 177–216 (DQED…GDCV), and 221–267 (GHPL…FLGV). Positions 311–408 (VDSDEEEDDE…VIDKDFFDGL (98 aa)) are disordered. Acidic residues-rich tracts occupy residues 313–339 (SDEE…EDEE) and 356–366 (DESDDEDEEME). A compositionally biased stretch (basic and acidic residues) spans 396–408 (KETVIDKDFFDGL).

Belongs to the WD repeat WDR55 family.

It localises to the nucleus. It is found in the nucleolus. The protein is WD repeat-containing protein JIP5 (JIP5) of Coprinopsis cinerea (strain Okayama-7 / 130 / ATCC MYA-4618 / FGSC 9003) (Inky cap fungus).